The sequence spans 225 residues: RNA chaperone ProQ (225 aa).

Positions lysine 107 to arginine 169 are disordered. The span at arginine 109 to glutamine 118 shows a compositional bias: low complexity. Residues arginine 137–proline 146 are compositionally biased toward basic residues. The span at arginine 147 to lysine 156 shows a compositional bias: basic and acidic residues.

Belongs to the ProQ family.

It localises to the cytoplasm. Its function is as follows. RNA chaperone with significant RNA binding, RNA strand exchange and RNA duplexing activities. May regulate ProP activity through an RNA-based, post-transcriptional mechanism. This chain is RNA chaperone ProQ, found in Klebsiella pneumoniae subsp. pneumoniae (strain ATCC 700721 / MGH 78578).